Consider the following 609-residue polypeptide: Glutamine--fructose-6-phosphate aminotransferase [isomerizing] (609 aa).

The active-site Nucleophile; for GATase activity is Cys2. The Glutamine amidotransferase type-2 domain occupies 2–218; the sequence is CGIVGAVAQR…EGDIAEVTRR (217 aa). SIS domains follow at residues 286–426 and 458–599; these read AAKL…LKGV and LAED…VDQP. Lys604 functions as the For Fru-6P isomerization activity in the catalytic mechanism.

In terms of assembly, homodimer.

Its subcellular location is the cytoplasm. It carries out the reaction D-fructose 6-phosphate + L-glutamine = D-glucosamine 6-phosphate + L-glutamate. In terms of biological role, catalyzes the first step in hexosamine metabolism, converting fructose-6P into glucosamine-6P using glutamine as a nitrogen source. This is Glutamine--fructose-6-phosphate aminotransferase [isomerizing] from Photorhabdus laumondii subsp. laumondii (strain DSM 15139 / CIP 105565 / TT01) (Photorhabdus luminescens subsp. laumondii).